Here is a 235-residue protein sequence, read N- to C-terminus: Aspartate/glutamate leucyltransferase (235 aa).

This sequence belongs to the R-transferase family. Bpt subfamily.

It is found in the cytoplasm. It carries out the reaction N-terminal L-glutamyl-[protein] + L-leucyl-tRNA(Leu) = N-terminal L-leucyl-L-glutamyl-[protein] + tRNA(Leu) + H(+). The catalysed reaction is N-terminal L-aspartyl-[protein] + L-leucyl-tRNA(Leu) = N-terminal L-leucyl-L-aspartyl-[protein] + tRNA(Leu) + H(+). Its function is as follows. Functions in the N-end rule pathway of protein degradation where it conjugates Leu from its aminoacyl-tRNA to the N-termini of proteins containing an N-terminal aspartate or glutamate. This Pseudomonas syringae pv. syringae (strain B728a) protein is Aspartate/glutamate leucyltransferase.